The chain runs to 875 residues: uncharacterized protein (875 aa).

Disordered stretches follow at residues K29–I48, E481–K510, and D680–N705. Residues N31–T44 show a composition bias toward low complexity. Positions K695–N705 are enriched in basic and acidic residues.

This is an uncharacterized protein from Plasmodium falciparum (isolate 3D7).